The following is a 137-amino-acid chain: Large ribosomal subunit protein uL16 (137 aa).

This sequence belongs to the universal ribosomal protein uL16 family. As to quaternary structure, part of the 50S ribosomal subunit.

Functionally, binds 23S rRNA and is also seen to make contacts with the A and possibly P site tRNAs. The sequence is that of Large ribosomal subunit protein uL16 from Dinoroseobacter shibae (strain DSM 16493 / NCIMB 14021 / DFL 12).